Consider the following 338-residue polypeptide: Phenylalanine--tRNA ligase alpha subunit (338 aa).

Glu-253 contributes to the Mg(2+) binding site.

Belongs to the class-II aminoacyl-tRNA synthetase family. Phe-tRNA synthetase alpha subunit type 1 subfamily. Tetramer of two alpha and two beta subunits. Requires Mg(2+) as cofactor.

The protein localises to the cytoplasm. The catalysed reaction is tRNA(Phe) + L-phenylalanine + ATP = L-phenylalanyl-tRNA(Phe) + AMP + diphosphate + H(+). In Geobacter metallireducens (strain ATCC 53774 / DSM 7210 / GS-15), this protein is Phenylalanine--tRNA ligase alpha subunit.